A 252-amino-acid polypeptide reads, in one-letter code: SPbeta prophage-derived uncharacterized protein YomH (252 aa).

This is SPbeta prophage-derived uncharacterized protein YomH (yomH) from Bacillus subtilis (strain 168).